Reading from the N-terminus, the 186-residue chain is Acireductone dioxygenase (186 aa).

Fe(2+) is bound by residues histidine 89, histidine 91, glutamate 95, and histidine 134. Ni(2+) is bound by residues histidine 89, histidine 91, glutamate 95, and histidine 134.

Belongs to the acireductone dioxygenase (ARD) family. Fe(2+) serves as cofactor. Requires Ni(2+) as cofactor.

It is found in the cytoplasm. The protein resides in the nucleus. The enzyme catalyses 1,2-dihydroxy-5-(methylsulfanyl)pent-1-en-3-one + O2 = 4-methylsulfanyl-2-oxobutanoate + formate + 2 H(+). It catalyses the reaction 1,2-dihydroxy-5-(methylsulfanyl)pent-1-en-3-one + O2 = 3-(methylsulfanyl)propanoate + CO + formate + 2 H(+). It participates in amino-acid biosynthesis; L-methionine biosynthesis via salvage pathway; L-methionine from S-methyl-5-thio-alpha-D-ribose 1-phosphate: step 5/6. Its function is as follows. Catalyzes 2 different reactions between oxygen and the acireductone 1,2-dihydroxy-3-keto-5-methylthiopentene (DHK-MTPene) depending upon the metal bound in the active site. Fe-containing acireductone dioxygenase (Fe-ARD) produces formate and 2-keto-4-methylthiobutyrate (KMTB), the alpha-ketoacid precursor of methionine in the methionine recycle pathway. Ni-containing acireductone dioxygenase (Ni-ARD) produces methylthiopropionate, carbon monoxide and formate, and does not lie on the methionine recycle pathway. In Drosophila melanogaster (Fruit fly), this protein is Acireductone dioxygenase.